The sequence spans 786 residues: Endonuclease MutS2 (786 aa).

An ATP-binding site is contributed by 335 to 342 (GPNTGGKT). In terms of domain architecture, Smr spans 711 to 786 (LDLRGERFEN…GLGVTVVELK (76 aa)).

It belongs to the DNA mismatch repair MutS family. MutS2 subfamily. Homodimer. Binds to stalled ribosomes, contacting rRNA.

Its function is as follows. Endonuclease that is involved in the suppression of homologous recombination and thus may have a key role in the control of bacterial genetic diversity. Acts as a ribosome collision sensor, splitting the ribosome into its 2 subunits. Detects stalled/collided 70S ribosomes which it binds and splits by an ATP-hydrolysis driven conformational change. Acts upstream of the ribosome quality control system (RQC), a ribosome-associated complex that mediates the extraction of incompletely synthesized nascent chains from stalled ribosomes and their subsequent degradation. Probably generates substrates for RQC. This chain is Endonuclease MutS2, found in Bacillus cereus (strain AH820).